Consider the following 190-residue polypeptide: Xanthine phosphoribosyltransferase (190 aa).

Residues L20 and N27 each coordinate xanthine. 128 to 132 (ANGKA) is a 5-phospho-alpha-D-ribose 1-diphosphate binding site. K156 serves as a coordination point for xanthine.

This sequence belongs to the purine/pyrimidine phosphoribosyltransferase family. Xpt subfamily. As to quaternary structure, homodimer.

It localises to the cytoplasm. It catalyses the reaction XMP + diphosphate = xanthine + 5-phospho-alpha-D-ribose 1-diphosphate. It functions in the pathway purine metabolism; XMP biosynthesis via salvage pathway; XMP from xanthine: step 1/1. Converts the preformed base xanthine, a product of nucleic acid breakdown, to xanthosine 5'-monophosphate (XMP), so it can be reused for RNA or DNA synthesis. In Ruminiclostridium cellulolyticum (strain ATCC 35319 / DSM 5812 / JCM 6584 / H10) (Clostridium cellulolyticum), this protein is Xanthine phosphoribosyltransferase.